A 156-amino-acid chain; its full sequence is Transcriptional repressor NrdR (156 aa).

The segment at 3 to 34 (CPYCRHPDSRVVDSREAEEGAAIRRRRSCPNC) is a zinc-finger region. Residues 46 to 136 (LSVVKRSGVT…VYRSFTSAED (91 aa)) form the ATP-cone domain.

It belongs to the NrdR family. It depends on Zn(2+) as a cofactor.

In terms of biological role, negatively regulates transcription of bacterial ribonucleotide reductase nrd genes and operons by binding to NrdR-boxes. The polypeptide is Transcriptional repressor NrdR (Nocardia farcinica (strain IFM 10152)).